The following is a 424-amino-acid chain: MFYDQAKIYVKGGDGGAGAVAFRREKYVPEGGPSGGDGGRGGKVIFIADEGLRTLVDFRYKRHYKADRGEHGQGKNMHGKSGEDMSVRIPVGTVVKDADTGEILADLIEHGQKVVVANGGRGGRGNARFMSNTNKAPTVAENGEPGEERNLLLELKLLADVGLVGFPNVGKSTIISRISAAKPKIADYHFTTLVPNLGVVELEDGESFVVADIPGLIEGAHTGAGLGHEFLRHTERTRLILHVLDIAGSEERDPLEDFQIIAEELRQYSQELANRPILIVANKMDIPGAEENLQRLTEKLGEDYRIFPVSAATGEGLKELVYAAAKALPEIPAPQIFVRDEEQHKLTQASAPHRFELTREGDFFVVSGKEVEKHVQMTMFDREDGLYRFQNILKAMGIERALLDEGIKVGDKVRIAGIEFEWEE.

Positions 1 to 158 (MFYDQAKIYV…RNLLLELKLL (158 aa)) constitute an Obg domain. Residues 159-329 (ADVGLVGFPN…LVYAAAKALP (171 aa)) form the OBG-type G domain. GTP contacts are provided by residues 165–172 (GFPNVGKS), 190–194 (FTTLV), 212–215 (DIPG), 282–285 (NKMD), and 310–312 (SAA). The Mg(2+) site is built by Ser172 and Thr192. In terms of domain architecture, OCT spans 347–424 (TQASAPHRFE…IAGIEFEWEE (78 aa)).

It belongs to the TRAFAC class OBG-HflX-like GTPase superfamily. OBG GTPase family. In terms of assembly, monomer. The cofactor is Mg(2+).

The protein resides in the cytoplasm. An essential GTPase which binds GTP, GDP and possibly (p)ppGpp with moderate affinity, with high nucleotide exchange rates and a fairly low GTP hydrolysis rate. Plays a role in control of the cell cycle, stress response, ribosome biogenesis and in those bacteria that undergo differentiation, in morphogenesis control. This is GTPase Obg from Desulfitobacterium hafniense (strain DSM 10664 / DCB-2).